Reading from the N-terminus, the 340-residue chain is Ketol-acid reductoisomerase (NADP(+)) (340 aa).

The KARI N-terminal Rossmann domain occupies 1–182 (MRVYYDRDCD…GGGRSGIIET (182 aa)). Residues 24–27 (YGSQ), Arg48, Ser51, Ser53, and 83–86 (DELQ) each bind NADP(+). The active site involves His108. Gly134 serves as a coordination point for NADP(+). The KARI C-terminal knotted domain maps to 183 to 329 (NFREECETDL…ETLRGMMPWI (147 aa)). Positions 191, 195, 227, and 231 each coordinate Mg(2+). Residue Ser252 participates in substrate binding.

The protein belongs to the ketol-acid reductoisomerase family. The cofactor is Mg(2+).

It catalyses the reaction (2R)-2,3-dihydroxy-3-methylbutanoate + NADP(+) = (2S)-2-acetolactate + NADPH + H(+). The catalysed reaction is (2R,3R)-2,3-dihydroxy-3-methylpentanoate + NADP(+) = (S)-2-ethyl-2-hydroxy-3-oxobutanoate + NADPH + H(+). The protein operates within amino-acid biosynthesis; L-isoleucine biosynthesis; L-isoleucine from 2-oxobutanoate: step 2/4. It functions in the pathway amino-acid biosynthesis; L-valine biosynthesis; L-valine from pyruvate: step 2/4. Involved in the biosynthesis of branched-chain amino acids (BCAA). Catalyzes an alkyl-migration followed by a ketol-acid reduction of (S)-2-acetolactate (S2AL) to yield (R)-2,3-dihydroxy-isovalerate. In the isomerase reaction, S2AL is rearranged via a Mg-dependent methyl migration to produce 3-hydroxy-3-methyl-2-ketobutyrate (HMKB). In the reductase reaction, this 2-ketoacid undergoes a metal-dependent reduction by NADPH to yield (R)-2,3-dihydroxy-isovalerate. In Roseobacter denitrificans (strain ATCC 33942 / OCh 114) (Erythrobacter sp. (strain OCh 114)), this protein is Ketol-acid reductoisomerase (NADP(+)).